We begin with the raw amino-acid sequence, 349 residues long: Putative transport protein jhp_0514 (349 aa).

8 helical membrane passes run 6–26 (FFWILFLIGFYWMLYLYQDFL), 27–47 (MDALIAGLLCVGLFQVKVFLN), 56–76 (SFLCVLVLASVVIVPLYFIVY), 143–163 (LKLVTDALFILGLLFFFFYYG), 195–215 (VLLTSLITVILEGVAFGTMII), 224–244 (LGILYGLASLVPAVGGALIWI), 258–278 (EAIFIVLYSILLIGVLIDSVI), and 300–320 (ILIFFSMIAGISQFGFWGIIV).

Belongs to the autoinducer-2 exporter (AI-2E) (TC 2.A.86) family.

The protein resides in the cell membrane. This is Putative transport protein jhp_0514 from Helicobacter pylori (strain J99 / ATCC 700824) (Campylobacter pylori J99).